We begin with the raw amino-acid sequence, 558 residues long: Arginine--tRNA ligase (558 aa).

The 'HIGH' region motif lies at 119 to 129; the sequence is ANPDGPLHVGH.

It belongs to the class-I aminoacyl-tRNA synthetase family.

The protein resides in the cytoplasm. It catalyses the reaction tRNA(Arg) + L-arginine + ATP = L-arginyl-tRNA(Arg) + AMP + diphosphate. The protein is Arginine--tRNA ligase of Methanothrix thermoacetophila (strain DSM 6194 / JCM 14653 / NBRC 101360 / PT) (Methanosaeta thermophila).